Reading from the N-terminus, the 151-residue chain is MESWLFLALILVVALLGKNMSLIIATAVVMLFKLLPFTGKWLPTIQAKGINWGVTIISVAILIPIATGQIGFKDLIRTFKTPAGWIAILAGIAVAVLSRYGVNQLAAVPQVTVALVLGTIIGVVAFKGVAAGPVIASGMTYLVVTLFNLHF.

The next 4 membrane-spanning stretches (helical) occupy residues 4-24 (WLFL…SLII), 52-72 (WGVT…QIGF), 78-98 (TFKT…AVLS), and 115-135 (LVLG…GPVI).

The protein belongs to the UPF0756 family.

It is found in the cell membrane. In Lactobacillus acidophilus (strain ATCC 700396 / NCK56 / N2 / NCFM), this protein is UPF0756 membrane protein LBA0919.